A 539-amino-acid polypeptide reads, in one-letter code: Alpha-aminoadipic semialdehyde dehydrogenase (539 aa).

Residues Met1–Ala26 constitute a mitochondrion transit peptide. 3 positions are modified to N6-acetyllysine; alternate: Lys86, Lys94, and Lys97. N6-succinyllysine; alternate occurs at positions 86, 94, and 97. NAD(+)-binding positions include Thr192 to Phe194, Lys218, Gly258 to Thr259, Gly274 to Ser275, Gly274 to Gly279, and Glu296 to Leu297. Glu296 acts as the Proton acceptor in catalysis. Catalysis depends on Cys330, which acts as the Nucleophile. Residue Thr331 participates in (S)-2-amino-6-oxohexanoate binding. Position 427 (Glu427) interacts with NAD(+). Lys462 is modified (N6-acetyllysine). The (S)-2-amino-6-oxohexanoate site is built by Gly489 and Ala490. The residue at position 500 (Lys500) is an N6-acetyllysine. N6-succinyllysine is present on Lys537.

It belongs to the aldehyde dehydrogenase family. In terms of assembly, homotetramer. As to expression, present in liver, kidney, brain and pancreas, and at lower levels in jejunum, duodenum, stomach and testes (at protein level).

The protein localises to the cytoplasm. The protein resides in the cytosol. It localises to the nucleus. Its subcellular location is the mitochondrion. The catalysed reaction is nonanal + NAD(+) + H2O = nonanoate + NADH + 2 H(+). It carries out the reaction (S)-2-amino-6-oxohexanoate + NAD(+) + H2O = L-2-aminoadipate + NADH + 2 H(+). The enzyme catalyses betaine aldehyde + NAD(+) + H2O = glycine betaine + NADH + 2 H(+). It catalyses the reaction an aldehyde + NAD(+) + H2O = a carboxylate + NADH + 2 H(+). The catalysed reaction is hexanal + NAD(+) + H2O = hexanoate + NADH + 2 H(+). It carries out the reaction octanal + NAD(+) + H2O = octanoate + NADH + 2 H(+). The enzyme catalyses (E)-non-2-enal + NAD(+) + H2O = (E)-non-2-enoate + NADH + 2 H(+). It catalyses the reaction (E)-4-hydroxynon-2-enal + NAD(+) + H2O = (E)-4-hydroxynon-2-enoate + NADH + 2 H(+). It participates in amine and polyamine biosynthesis; betaine biosynthesis via choline pathway; betaine from betaine aldehyde: step 1/1. In terms of biological role, multifunctional enzyme mediating important protective effects. Metabolizes betaine aldehyde to betaine, an important cellular osmolyte and methyl donor. Protects cells from oxidative stress by metabolizing a number of lipid peroxidation-derived aldehydes. Involved in lysine catabolism. In Mus musculus (Mouse), this protein is Alpha-aminoadipic semialdehyde dehydrogenase.